The sequence spans 55 residues: uncharacterized protein (55 aa).

This is an uncharacterized protein from Sulfolobus islandicus rod-shaped virus 1 (SIRV-1).